A 678-amino-acid chain; its full sequence is ATP-dependent RNA helicase DHX58 (678 aa).

Residues 11–188 (ILPALEGKNI…QGAIDHILQL (178 aa)) form the Helicase ATP-binding domain. 24–31 (LPTGAGKT) lines the ATP pocket. The DECH box signature appears at 131–134 (DECH). Residues 353–514 (MLERILLKQF…KAVAAVQKMD (162 aa)) form the Helicase C-terminal domain. A coiled-coil region spans residues 489-546 (EMKRELTNEALEVLMEKAVAAVQKMDPDEFKAKIRDLQQASLVKRAARAAHREIQQGQ). The region spanning 542-669 (IQQGQFLPEH…PVFDILQDCT (128 aa)) is the RLR CTR domain. Cys556, Cys559, Cys612, and Cys615 together coordinate Zn(2+). The segment at 572-655 (VEGTHHVNVN…KIQAKKWSRV (84 aa)) is RNA-binding.

The protein belongs to the helicase family. RLR subfamily. As to quaternary structure, monomer in the absence of dsRNA. Homodimer in the presence of dsRNA. Interacts with RIGI (via CARD domain), MAVS/IPS1 and DDX60. Found in a complex with RIGI and IFIH1/MDA5. Interacts with ANKRD17. Directly interacts with ATG5 and ATG12, either as ATG5 and ATG12 monomers or as ATG12-ATG5 conjugates. As to expression, highly expressed in mammary tissues. Expressed in liver and testis. Expressed at lower level in spleen, embryo, mammary gland and breast tumors.

It localises to the cytoplasm. It carries out the reaction ATP + H2O = ADP + phosphate + H(+). In terms of biological role, acts as a regulator of RIGI and IFIH1/MDA5 mediated antiviral signaling. Cannot initiate antiviral signaling as it lacks the CARD domain required for activating MAVS/IPS1-dependent signaling events. Can have both negative and positive regulatory functions related to RIGI and IFIH1/MDA5 signaling and this role in regulating signaling may be complex and could probably depend on characteristics of the infecting virus or target cells, or both. Its inhibitory action on RIG-I signaling may involve the following mechanisms: competition with RIGI for binding to the viral RNA, binding to RIGI and inhibiting its dimerization and interaction with MAVS/IPS1, competing with IKBKE in its binding to MAVS/IPS1 thereby inhibiting activation of interferon regulatory factor 3 (IRF3). Its positive regulatory role may involve unwinding or stripping nucleoproteins of viral RNA thereby facilitating their recognition by RIGI and IFIH1/MDA5. Involved in the innate immune response to various RNA viruses and some DNA viruses such as poxviruses, and also to the bacterial pathogen Listeria monocytogenes. Can bind both ssRNA and dsRNA, with a higher affinity for dsRNA. Shows a preference to 5'-triphosphorylated RNA, although it can recognize RNA lacking a 5'-triphosphate. This Mus musculus (Mouse) protein is ATP-dependent RNA helicase DHX58.